The primary structure comprises 1136 residues: Collagen alpha-1(XIX) chain (1136 aa).

A signal peptide spans 1–23 (MRHTGSWKLWTWVTTFLLPACTC). A glycan (N-linked (GlcNAc...) asparagine) is linked at N47. The 185-residue stretch at 47–231 (NKSELSGFDL…LHQLRIYCNA (185 aa)) folds into the Laminin G-like domain. Disordered regions lie at residues 252–272 (DFGS…SSYL), 289–673 (EEAG…PGDP), 699–1005 (GLKS…TPAD), and 1043–1136 (SAQA…AGGK). The segment covering 254–266 (GSTTSSWGTSNTG) has biased composition (low complexity). Residues 289-348 (EEAGLPGTLRSIGHKGDKGEPGEHGLDGTPGLPGQKGEQGLEGIKGEIGEKGEPGAKGDS) are triple-helical region 1 (COL1). Collagen-like domains follow at residues 292–346 (GLPG…GAKG), 347–388 (DSGL…ALTG), and 389–430 (SIGI…GLQG). Composition is skewed to basic and acidic residues over residues 302-314 (HKGD…EHGL) and 332-344 (IKGE…EPGA). A triple-helical region 2 (COL2) region spans residues 367–426 (GPPGPKGDKGDMGPPGPPALTGSIGIQGPQGPPGKEGQRGRRGKTGPPGNPGPPGPPGPP). The segment covering 387–401 (TGSIGIQGPQGPPGK) has biased composition (low complexity). Residues 414–426 (PGNPGPPGPPGPP) are compositionally biased toward pro residues. Over residues 428 to 437 (LQGLQQPFGG) the composition is skewed to low complexity. The interval 442 to 682 (GTGEHGASGP…PIALPLLGDI (241 aa)) is triple-helical region 3 (COL3). Residues 472-490 (HKGEPGEPLTKGEKGDRGE) are compositionally biased toward basic and acidic residues. 2 stretches are compositionally biased toward low complexity: residues 511–523 (LLGS…QQGP) and 567–577 (PGLKGDAGPPG). 6 Collagen-like domains span residues 519–577 (GQQG…GPPG), 578–618 (ISLP…GPPG), 620–673 (GIPG…PGDP), 722–777 (KGDV…GPPG), 778–810 (LTGR…GPPG), and 833–891 (GYPG…APGP). The segment covering 634–645 (PGIQGPRGLPGL) has biased composition (low complexity). The interval 694 to 812 (QANVPGLKSI…PGPPGPPGVP (119 aa)) is triple-helical region 4 (COL4). Basic and acidic residues-rich tracts occupy residues 714 to 725 (GKYDPAARKGDV) and 737 to 758 (EGPK…KGDE). A compositionally biased stretch (low complexity) spans 764–788 (PGLSGAPGPTGPPGLTGRTGHPGPT). Pro residues-rich tracts occupy residues 800 to 811 (PGKPGPPGPPGV) and 834 to 846 (YPGP…PKGD). The segment at 827 to 1006 (GGVNVPGYPG…PGIPGTPADA (180 aa)) is triple-helical region 5 (COL5). Over residues 877 to 886 (PGIAGISGKP) the composition is skewed to low complexity. The span at 937 to 948 (PGDRGPKGERGD) shows a compositional bias: basic and acidic residues. Residues 946–948 (RGD) carry the Cell attachment site motif. Positions 1048 to 1105 (GRPGPPGKDGLPGPPGDPGPQGYRGQKGERGEPGIGLPGSPGLPGSSAVGLPGSPGAP) are triple-helical region 6 (COL6). Positions 1087–1101 (SPGLPGSSAVGLPGS) are enriched in low complexity. A compositionally biased stretch (pro residues) spans 1102–1113 (PGAPGPQGPPGP).

It belongs to the fibril-associated collagens with interrupted helices (FACIT) family. As to quaternary structure, oligomer; disulfide-linked. In terms of processing, prolines at the third position of the tripeptide repeating unit (G-X-Y) are hydroxylated in some or all of the chains.

The protein localises to the secreted. Its subcellular location is the extracellular space. It is found in the extracellular matrix. May act as a cross-bridge between fibrils and other extracellular matrix molecules. Involved in skeletal myogenesis in the developing esophagus. May play a role in organization of the pericellular matrix or the sphinteric smooth muscle. This is Collagen alpha-1(XIX) chain from Mus musculus (Mouse).